The following is a 234-amino-acid chain: ATP-dependent dethiobiotin synthetase BioD (234 aa).

An ATP-binding site is contributed by 12 to 17 (GAGKTI). Thr16 provides a ligand contact to Mg(2+). Lys39 is a catalytic residue. Thr43 contacts substrate. ATP contacts are provided by residues Asp47, 108–111 (EGLG), 168–169 (SC), and 200–202 (PYL). Asp47 and Glu108 together coordinate Mg(2+).

The protein belongs to the dethiobiotin synthetase family. In terms of assembly, homodimer. Requires Mg(2+) as cofactor.

The protein resides in the cytoplasm. It carries out the reaction (7R,8S)-7,8-diammoniononanoate + CO2 + ATP = (4R,5S)-dethiobiotin + ADP + phosphate + 3 H(+). The enzyme catalyses (7R,8S)-8-amino-7-(carboxyamino)nonanoate + ATP = (4R,5S)-dethiobiotin + ADP + phosphate + H(+). It functions in the pathway cofactor biosynthesis; biotin biosynthesis; biotin from 7,8-diaminononanoate: step 1/2. In terms of biological role, catalyzes a mechanistically unusual reaction, the ATP-dependent insertion of CO2 between the N7 and N8 nitrogen atoms of 7,8-diaminopelargonic acid (DAPA, also called 7,8-diammoniononanoate) to form a ureido ring. This cyanobacterium does not encode bioA (which catalyzes the formation of the precursor for this reaction in the cannonical pathway), instead it encodes bioU, which replaces bioA and also performs the first half of the cannonical BioD reaction. Thus in this organism BioD has a different substrate. This is ATP-dependent dethiobiotin synthetase BioD from Rippkaea orientalis (strain PCC 8801 / RF-1) (Cyanothece sp. (strain PCC 8801)).